Here is a 100-residue protein sequence, read N- to C-terminus: uncharacterized protein (100 aa).

Residues 1–100 (MEPIEVFKAL…KLADFLKTEI (100 aa)) enclose the HTH arsR-type domain. Positions 44 to 67 (VSQITDKLKMTQSTASQYLTILLR) form a DNA-binding region, H-T-H motif.

This is an uncharacterized protein from Bacillus subtilis (strain 168).